The sequence spans 638 residues: Chaperone protein HtpG (638 aa).

Residues 1–344 are a; substrate-binding; that stretch reads MQKKETLEFQ…SNDLPLNVSR (344 aa). The interval 345–560 is b; it reads EILQNNENIY…ENDITTQMSK (216 aa). The interval 561-638 is c; sequence LLISTGQESP…LLLSNIIRLN (78 aa).

The protein belongs to the heat shock protein 90 family. As to quaternary structure, homodimer.

The protein localises to the cytoplasm. In terms of biological role, molecular chaperone. Has ATPase activity. This chain is Chaperone protein HtpG, found in Wigglesworthia glossinidia brevipalpis.